The primary structure comprises 302 residues: tRNA pseudouridine synthase B (302 aa).

Asp-45 acts as the Nucleophile in catalysis.

It belongs to the pseudouridine synthase TruB family. Type 1 subfamily.

The enzyme catalyses uridine(55) in tRNA = pseudouridine(55) in tRNA. In terms of biological role, responsible for synthesis of pseudouridine from uracil-55 in the psi GC loop of transfer RNAs. The sequence is that of tRNA pseudouridine synthase B from Francisella tularensis subsp. tularensis (strain WY96-3418).